The sequence spans 496 residues: UDP-N-acetylmuramoyl-L-alanyl-D-glutamate--2,6-diaminopimelate ligase (496 aa).

Positions 24 and 26 each coordinate UDP-N-acetyl-alpha-D-muramoyl-L-alanyl-D-glutamate. ATP is bound at residue 109–115; that stretch reads GTNGKTS. UDP-N-acetyl-alpha-D-muramoyl-L-alanyl-D-glutamate contacts are provided by residues 151–152, S178, Q184, and R186; that span reads TT. At K218 the chain carries N6-carboxylysine. Meso-2,6-diaminopimelate contacts are provided by residues R387, 411–414, G462, and E466; that span reads DNPR. The Meso-diaminopimelate recognition motif signature appears at 411–414; sequence DNPR.

This sequence belongs to the MurCDEF family. MurE subfamily. It depends on Mg(2+) as a cofactor. Carboxylation is probably crucial for Mg(2+) binding and, consequently, for the gamma-phosphate positioning of ATP.

The protein resides in the cytoplasm. It carries out the reaction UDP-N-acetyl-alpha-D-muramoyl-L-alanyl-D-glutamate + meso-2,6-diaminopimelate + ATP = UDP-N-acetyl-alpha-D-muramoyl-L-alanyl-gamma-D-glutamyl-meso-2,6-diaminopimelate + ADP + phosphate + H(+). The protein operates within cell wall biogenesis; peptidoglycan biosynthesis. In terms of biological role, catalyzes the addition of meso-diaminopimelic acid to the nucleotide precursor UDP-N-acetylmuramoyl-L-alanyl-D-glutamate (UMAG) in the biosynthesis of bacterial cell-wall peptidoglycan. The chain is UDP-N-acetylmuramoyl-L-alanyl-D-glutamate--2,6-diaminopimelate ligase from Pseudomonas putida (strain ATCC 47054 / DSM 6125 / CFBP 8728 / NCIMB 11950 / KT2440).